Consider the following 191-residue polypeptide: Prostaglandin-H2 D-isomerase (191 aa).

An N-terminal signal peptide occupies residues 1 to 24 (MAALHTLWMGLVLLGVLGVLQTQA). Residue Q25 is modified to Pyrrolidone carboxylic acid. The N-linked (GlcNAc...) asparagine glycan is linked to N51. The active-site Nucleophile is C65. Residue N78 is glycosylated (N-linked (GlcNAc...) asparagine). A disulfide bond links C89 and C186.

It belongs to the calycin superfamily. Lipocalin family. In terms of assembly, monomer.

Its subcellular location is the rough endoplasmic reticulum. It localises to the nucleus membrane. The protein resides in the golgi apparatus. It is found in the cytoplasm. The protein localises to the perinuclear region. Its subcellular location is the secreted. The enzyme catalyses prostaglandin H2 = prostaglandin D2. Its function is as follows. Catalyzes the conversion of PGH2 to PGD2, a prostaglandin involved in smooth muscle contraction/relaxation and a potent inhibitor of platelet aggregation. Involved in a variety of CNS functions, such as sedation, NREM sleep and PGE2-induced allodynia, and may have an anti-apoptotic role in oligodendrocytes. Binds small non-substrate lipophilic molecules, including biliverdin, bilirubin, retinal, retinoic acid and thyroid hormone, and may act as a scavenger for harmful hydrophobic molecules and as a secretory retinoid and thyroid hormone transporter. Possibly involved in development and maintenance of the blood-brain, blood-retina, blood-aqueous humor and blood-testis barrier. It is likely to play important roles in both maturation and maintenance of the central nervous system and male reproductive system. Involved in PLA2G3-dependent maturation of mast cells. PLA2G3 is secreted by immature mast cells and acts on nearby fibroblasts upstream to PTDGS to synthesize PGD2, which in turn promotes mast cell maturation and degranulation via PTGDR. The chain is Prostaglandin-H2 D-isomerase (PTGDS) from Ursus arctos (Brown bear).